We begin with the raw amino-acid sequence, 158 residues long: Transcriptional regulator MraZ (158 aa).

2 SpoVT-AbrB domains span residues 5-52 (IYET…TFSS) and 91-134 (AVEC…SQAE).

Belongs to the MraZ family. In terms of assembly, forms oligomers.

The protein resides in the cytoplasm. The protein localises to the nucleoid. The chain is Transcriptional regulator MraZ from Geobacter sulfurreducens (strain ATCC 51573 / DSM 12127 / PCA).